The following is a 225-amino-acid chain: Uracil-DNA glycosylase (225 aa).

Asp-65 serves as the catalytic Proton acceptor.

This sequence belongs to the uracil-DNA glycosylase (UDG) superfamily. UNG family.

Its subcellular location is the cytoplasm. It catalyses the reaction Hydrolyzes single-stranded DNA or mismatched double-stranded DNA and polynucleotides, releasing free uracil.. Excises uracil residues from the DNA which can arise as a result of misincorporation of dUMP residues by DNA polymerase or due to deamination of cytosine. The chain is Uracil-DNA glycosylase from Alkaliphilus oremlandii (strain OhILAs) (Clostridium oremlandii (strain OhILAs)).